Here is a 772-residue protein sequence, read N- to C-terminus: uncharacterized protein (772 aa).

Transmembrane regions (helical) follow at residues 16–36 and 301–321; these read LITF…LFSY and IGWI…LFSW. The 99-residue stretch at 670-768 folds into the HTH araC/xylS-type domain; it reads DNIIHIIHHE…GITPGNYRQQ (99 aa). 2 DNA-binding regions (H-T-H motif) span residues 687–708 and 735–758; these read DEIA…KKEM and VKDI…KKLE.

The protein localises to the cell membrane. This is an uncharacterized protein from Bacillus subtilis (strain 168).